Consider the following 177-residue polypeptide: ATP-dependent protease subunit HslV (177 aa).

T2 is a catalytic residue. Na(+) contacts are provided by G157, C160, and T163.

The protein belongs to the peptidase T1B family. HslV subfamily. As to quaternary structure, a double ring-shaped homohexamer of HslV is capped on each side by a ring-shaped HslU homohexamer. The assembly of the HslU/HslV complex is dependent on binding of ATP.

The protein localises to the cytoplasm. It carries out the reaction ATP-dependent cleavage of peptide bonds with broad specificity.. Its activity is regulated as follows. Allosterically activated by HslU binding. Protease subunit of a proteasome-like degradation complex believed to be a general protein degrading machinery. This is ATP-dependent protease subunit HslV from Aeromonas salmonicida (strain A449).